The primary structure comprises 577 residues: Cell adhesion molecule CEACAM20 (577 aa).

The N-terminal stretch at 1 to 30 (MELAGFHCCSWTVILLSALLPTTWRPPAAA) is a signal peptide. Residues 31–430 (HFIHRADLLS…LQSSSMSPGA (400 aa)) are Extracellular-facing. Ig-like C2-type domains lie at 48 to 137 (PLAK…ASLT), 142 to 223 (PDPV…TNLS), 239 to 324 (PNIE…LKLT), and 329 to 415 (PDQV…ASVL). An intrachain disulfide couples Cys-72 to Cys-120. N-linked (GlcNAc...) asparagine glycans are attached at residues Asn-78 and Asn-102. Disulfide bonds link Cys-259-Cys-307 and Cys-358-Cys-399. N-linked (GlcNAc...) asparagine glycosylation occurs at Asn-289. A helical transmembrane segment spans residues 431-451 (IAGIVIGILVAIALAIGLGYF). The Cytoplasmic portion of the chain corresponds to 452–577 (LYSTKDRWTR…SLYCKITPSA (126 aa)). The segment at 461-568 (RRRSASDTTS…YEKLLNSNHS (108 aa)) is disordered. Residues 474–484 (IPPTSVMQSTP) show a composition bias toward polar residues. Residues 516–526 (DSPEQFYEKKP) are compositionally biased toward basic and acidic residues. Residues 536 to 551 (KPLPQIPKQPLMPPGP) are compositionally biased toward pro residues. Residues Tyr-559 and Tyr-570 each carry the phosphotyrosine modification.

Belongs to the immunoglobulin superfamily. CEA family. In terms of assembly, interacts (via extracellular domain) with PTPRH (via extracellular domain); the interaction dephosphorylates CEACAM20. Interacts (phosphorylated form) with SYK (via SH2 domains); the interaction further enhances CEACAM20 phosphorylation. Post-translationally, phosphorylated on tyrosine residues by SYK, SRC and FYN in vitro. Strongly expressed in the small intestine and colon (at protein level). Minimal expression in other tissues (at protein level). Highly expressed in cecum, colon, ileum, jejunum, and testis, and also detected at lower levels in salivary gland and thymus.

The protein resides in the cell projection. It localises to the microvillus membrane. Its subcellular location is the apical cell membrane. Its function is as follows. Together with the tyrosine-protein kinase SYK, enhances production of the cytokine CXCL8/IL-8 via the NFKB pathway and may thus have a role in the intestinal immune response. This chain is Cell adhesion molecule CEACAM20, found in Mus musculus (Mouse).